Consider the following 281-residue polypeptide: Pantothenate synthetase (281 aa).

30–37 (MGNLHQGH) lines the ATP pocket. Catalysis depends on histidine 37, which acts as the Proton donor. Glutamine 61 lines the (R)-pantoate pocket. Beta-alanine is bound at residue glutamine 61. 149–152 (GNKD) is an ATP binding site. Glutamine 155 contributes to the (R)-pantoate binding site. ATP is bound by residues isoleucine 178 and 186–189 (MSSR).

Belongs to the pantothenate synthetase family. Homodimer.

It localises to the cytoplasm. The enzyme catalyses (R)-pantoate + beta-alanine + ATP = (R)-pantothenate + AMP + diphosphate + H(+). Its pathway is cofactor biosynthesis; (R)-pantothenate biosynthesis; (R)-pantothenate from (R)-pantoate and beta-alanine: step 1/1. Catalyzes the condensation of pantoate with beta-alanine in an ATP-dependent reaction via a pantoyl-adenylate intermediate. In Shewanella baltica (strain OS185), this protein is Pantothenate synthetase.